A 279-amino-acid polypeptide reads, in one-letter code: Putative potassium channel regulatory protein (279 aa).

The region spanning 5–74 is the BTB domain; the sequence is ELVTLNVGGM…VRTSQLSLPS (70 aa). Residues 256 to 279 form a disordered region; the sequence is ENSRQENYETETVQVKQAKPNKKR.

The protein resides in the endoplasmic reticulum. Inhibits potassium fluxes in cells, possibly by retaining potassium channels in the cytoplasm. This chain is Putative potassium channel regulatory protein (kcnrg), found in Xenopus tropicalis (Western clawed frog).